The following is a 901-amino-acid chain: HTH-type transcriptional regulator MalT (901 aa).

An ATP-binding site is contributed by 39–46 (SPAGYGKT). An HTH luxR-type domain is found at 829–894 (ELIRTSPLTQ…DAVQHAQQLL (66 aa)). A DNA-binding region (H-T-H motif) is located at residues 853–872 (NEQIAGELEVAATTIKTHIR).

The protein belongs to the MalT family. Monomer in solution. Oligomerizes to an active state in the presence of the positive effectors ATP and maltotriose.

Activated by ATP and maltotriose, which are both required for DNA binding. Positively regulates the transcription of the maltose regulon whose gene products are responsible for uptake and catabolism of malto-oligosaccharides. Specifically binds to the promoter region of its target genes, recognizing a short DNA motif called the MalT box. The polypeptide is HTH-type transcriptional regulator MalT (Escherichia coli (strain K12 / MC4100 / BW2952)).